We begin with the raw amino-acid sequence, 1419 residues long: Collagen alpha-1(II) chain (1419 aa).

The first 25 residues, 1-25 (MIRLGAPQSLVLLTLLIATVLQCQG), serve as a signal peptide directing secretion. Residues 26–113 (QDARKLGPKG…PGLGGGNFAA (88 aa)) constitute a propeptide, N-terminal propeptide. Residues 28–1168 (ARKLGPKGQK…GQREKGPDPL (1141 aa)) form a disordered region. Basic and acidic residues-rich tracts occupy residues 36 to 47 (QKGEPGDIKDII) and 64 to 85 (PRGD…RDGE). Residues 89-104 (PGNPGPPGPPGPPGPP) show a composition bias toward pro residues. K122 carries the post-translational modification 5-hydroxylysine. An O-linked (Gal...) hydroxylysine glycan is attached at K122. The span at 124 to 135 (GGAQMGVMQGPM) shows a compositional bias: low complexity. Positions 133 to 1146 (GPMGPMGPRG…PGPPGPPGPP (1014 aa)) are triple-helical region. Residues 140–149 (PRGPPGPAGA) are compositionally biased toward pro residues. The segment covering 150–171 (PGPQGFQGNPGEPGEPGVSGPI) has biased composition (low complexity). Residues 183-197 (PGDDGEAGKPGKAGE) are compositionally biased toward basic and acidic residues. 5-hydroxylysine is present on residues K219, K231, and K240. O-linked (Gal...) hydroxylysine glycans are attached at residues K219, K231, and K240. 2 stretches are compositionally biased toward low complexity: residues 242–252 (ESGSPGENGSP) and 267–282 (TGPA…DGQP). Gly residues predominate over residues 292–301 (GPAGGPGFLG). K306 is modified (5-hydroxylysine). O-linked (Gal...) hydroxylysine glycosylation is present at K306. Positions 335 to 363 (PAGASGNPGTDGIPGAKGSAGAPGIAGAP) are enriched in low complexity. Positions 365–374 (FPGPRGPPGP) are enriched in pro residues. The segment covering 404–417 (ETGPAGPQGAPGPA) has biased composition (low complexity). 5-hydroxylysine is present on residues K540 and K552. K540 and K552 each carry an O-linked (Gal...) hydroxylysine glycan. A compositionally biased stretch (low complexity) spans 554–563 (LAGAPGLRGL). A 4-hydroxyproline mark is found at P591 and P600. The residue at position 602 (P602) is a 3-hydroxyproline; partial. P603 and P606 each carry 4-hydroxyproline. Residues 638-668 (ERGSPGAQGLQGPRGLPGTPGTDGPKGAAGP) show a composition bias toward low complexity. Residues 696-707 (KGDRGDVGEKGP) are compositionally biased toward basic and acidic residues. Low complexity-rich tracts occupy residues 765 to 780 (AGFA…PGAK) and 809 to 846 (PTGV…NGNP). P839 carries the 3-hydroxyproline; partial modification. P840, P846, and P852 each carry 4-hydroxyproline. Positions 1001–1011 (APGPPGSPGPA) are enriched in pro residues. A compositionally biased stretch (basic and acidic residues) spans 1047 to 1061 (RGDKGEAGEPGERGL). The residue at position 1076 (P1076) is a 3-hydroxyproline; partial. 2 stretches are compositionally biased toward low complexity: residues 1080 to 1089 (SGDQGTSGPA) and 1103 to 1113 (PSGKDGSNGIP). Residue P1113 is modified to 4-hydroxyproline. Residue P1118 is modified to 3-hydroxyproline. At P1119 the chain carries 4-hydroxyproline. The span at 1131–1148 (AGPPGNPGPPGPPGPPGP) shows a compositional bias: pro residues. The residue at position 1133 (P1133) is a 3-hydroxyproline; partial. P1134 and P1137 each carry 4-hydroxyproline. P1139 is subject to 3-hydroxyproline; partial. 4-hydroxyproline occurs at positions 1140 and 1143. Position 1145 is a 3-hydroxyproline; partial (P1145). P1146 bears the 4-hydroxyproline mark. A nonhelical region (C-terminal) region spans residues 1147-1173 (GPGIDMSAFAGLGQREKGPDPLQYMRA). The region spanning 1185–1419 (VEVDATLKSL…GVDIGPVCFL (235 aa)) is the Fibrillar collagen NC1 domain. 3 disulfide bridges follow: C1215/C1247, C1255/C1417, and C1325/C1370. Residues D1233, N1235, Q1236, C1238, and D1241 each contribute to the Ca(2+) site. N-linked (GlcNAc...) asparagine glycosylation is present at N1320.

It belongs to the fibrillar collagen family. In terms of assembly, homotrimers of alpha 1(II) chains. In terms of processing, contains mostly 4-hydroxyproline. Prolines at the third position of the tripeptide repeating unit (G-X-P) are 4-hydroxylated in some or all of the chains. Contains 3-hydroxyproline at a few sites. This modification occurs on the first proline residue in the sequence motif Gly-Pro-Hyp, where Hyp is 4-hydroxyproline. Post-translationally, lysine residues at the third position of the tripeptide repeating unit (G-X-Y) are 5-hydroxylated in some or all of the chains. In terms of processing, O-glycosylated on hydroxylated lysine residues. The O-linked glycan consists of a Glc-Gal disaccharide. In terms of tissue distribution, expressed in chondrocytes.

Its subcellular location is the secreted. The protein resides in the extracellular space. The protein localises to the extracellular matrix. Its function is as follows. Type II collagen is specific for cartilaginous tissues. It is essential for the normal embryonic development of the skeleton, for linear growth and for the ability of cartilage to resist compressive forces. The chain is Collagen alpha-1(II) chain from Rattus norvegicus (Rat).